A 206-amino-acid polypeptide reads, in one-letter code: dITP/XTP pyrophosphatase (206 aa).

7 to 12 (TSNKDK) is a binding site for substrate. Asp-74 acts as the Proton acceptor in catalysis. A Mg(2+)-binding site is contributed by Asp-74. Substrate contacts are provided by residues Ser-75, 159 to 162 (FGYD), Lys-182, and 187 to 188 (HR).

This sequence belongs to the HAM1 NTPase family. In terms of assembly, homodimer. It depends on Mg(2+) as a cofactor.

It catalyses the reaction XTP + H2O = XMP + diphosphate + H(+). It carries out the reaction dITP + H2O = dIMP + diphosphate + H(+). The enzyme catalyses ITP + H2O = IMP + diphosphate + H(+). Its function is as follows. Pyrophosphatase that catalyzes the hydrolysis of nucleoside triphosphates to their monophosphate derivatives, with a high preference for the non-canonical purine nucleotides XTP (xanthosine triphosphate), dITP (deoxyinosine triphosphate) and ITP. Seems to function as a house-cleaning enzyme that removes non-canonical purine nucleotides from the nucleotide pool, thus preventing their incorporation into DNA/RNA and avoiding chromosomal lesions. The sequence is that of dITP/XTP pyrophosphatase from Campylobacter hominis (strain ATCC BAA-381 / DSM 21671 / CCUG 45161 / LMG 19568 / NCTC 13146 / CH001A).